Consider the following 793-residue polypeptide: uncharacterized protein (793 aa).

Residues 1–21 (MLKKTLLAYTIGFAFSPPANA) form the signal peptide. Cysteine 769 and cysteine 792 are joined by a disulfide.

Belongs to the fimbrial export usher family.

The protein localises to the cell outer membrane. Functionally, involved in the export and assembly of a fimbrial subunit across the outer membrane. This is an uncharacterized protein from Escherichia coli (strain K12).